A 456-amino-acid polypeptide reads, in one-letter code: tRNA-2-methylthio-N(6)-dimethylallyladenosine synthase (456 aa).

Residues 13–129 form the MTTase N-terminal domain; that stretch reads RYLYVRTFGC…IASLLEEVER (117 aa). The [4Fe-4S] cluster site is built by C22, C58, C92, C168, C172, and C175. A Radical SAM core domain is found at 154 to 384; it reads GTGDVVAQVT…QSIQADITLQ (231 aa). Residues 387–450 form the TRAM domain; the sequence is LAETGTVREV…SHSLKGELLS (64 aa).

Belongs to the methylthiotransferase family. MiaB subfamily. In terms of assembly, monomer. It depends on [4Fe-4S] cluster as a cofactor.

The protein localises to the cytoplasm. It carries out the reaction N(6)-dimethylallyladenosine(37) in tRNA + (sulfur carrier)-SH + AH2 + 2 S-adenosyl-L-methionine = 2-methylsulfanyl-N(6)-dimethylallyladenosine(37) in tRNA + (sulfur carrier)-H + 5'-deoxyadenosine + L-methionine + A + S-adenosyl-L-homocysteine + 2 H(+). Catalyzes the methylthiolation of N6-(dimethylallyl)adenosine (i(6)A), leading to the formation of 2-methylthio-N6-(dimethylallyl)adenosine (ms(2)i(6)A) at position 37 in tRNAs that read codons beginning with uridine. The sequence is that of tRNA-2-methylthio-N(6)-dimethylallyladenosine synthase from Syntrophobacter fumaroxidans (strain DSM 10017 / MPOB).